We begin with the raw amino-acid sequence, 105 residues long: Large ribosomal subunit protein uL24 (105 aa).

Basic and acidic residues predominate over residues 77–93 (DGKPTRVGYRKDDETGK). Residues 77–105 (DGKPTRVGYRKDDETGKNVRIAKSNGKDL) are disordered.

This sequence belongs to the universal ribosomal protein uL24 family. Part of the 50S ribosomal subunit.

In terms of biological role, one of two assembly initiator proteins, it binds directly to the 5'-end of the 23S rRNA, where it nucleates assembly of the 50S subunit. Functionally, one of the proteins that surrounds the polypeptide exit tunnel on the outside of the subunit. The sequence is that of Large ribosomal subunit protein uL24 from Mycolicibacterium gilvum (strain PYR-GCK) (Mycobacterium gilvum (strain PYR-GCK)).